We begin with the raw amino-acid sequence, 137 residues long: Large-conductance mechanosensitive channel (137 aa).

The next 2 membrane-spanning stretches (helical) occupy residues 10–30 and 76–96; these read FAMR…AAFG and GVFI…FVAI.

Belongs to the MscL family. Homopentamer.

It localises to the cell inner membrane. In terms of biological role, channel that opens in response to stretch forces in the membrane lipid bilayer. May participate in the regulation of osmotic pressure changes within the cell. The protein is Large-conductance mechanosensitive channel of Salmonella choleraesuis (strain SC-B67).